We begin with the raw amino-acid sequence, 31 residues long: Diuretic hormone class 2 (31 aa).

A Proline amide modification is found at Pro-31.

Belongs to the diuretic hormone class 2 family.

The protein resides in the secreted. In terms of biological role, regulation of fluid secretion. Stimulates primary urine secretion by Malpighian tubules and causes a dose-dependent stimulation of cAMP levels in the tubules. Has a nonselective effect on Na(+)/K(+) ion transport. In vitro, primarily elevates intracellular Ca(2+). The protein is Diuretic hormone class 2 of Apis mellifera (Honeybee).